We begin with the raw amino-acid sequence, 120 residues long: Protein RALF-like 1 (120 aa).

Residues 1-26 (MDKSFTLFLTLTILVVFIISSPPVQA) form the signal peptide. Residues 27–71 (GFANDLGGVAWATTGDNGSGCHGSIAECIGAEEEEMDSEINRRIL) constitute a propeptide, removed in mature form. An N-linked (GlcNAc...) asparagine glycan is attached at asparagine 43. 2 cysteine pairs are disulfide-bonded: cysteine 89-cysteine 99 and cysteine 112-cysteine 118.

It belongs to the plant rapid alkalinization factor (RALF) family. In terms of assembly, interacts with FER and promotes its phosphorylation and subsequent activation. Proteolytically cleaved, probably by S1P, a subtilisin-like serine protease (subtilase). In terms of tissue distribution, expressed in roots and stems.

The protein resides in the secreted. Its function is as follows. Cell signaling peptide that may regulate plant stress, growth, and development. Mediates a rapid alkalinization of extracellular space by mediating a transient increase in the cytoplasmic Ca(2+) concentration leading to a calcium-dependent signaling events through a cell surface receptor and a concomitant activation of some intracellular mitogen-activated protein kinases. Mostly active in roots. Prevents plant growth (e.g. root and leaf length). Suppresses cell elongation of the primary root by activating the cell surface receptor FER and triggering phosphorylation of AHA2 and subsequent extracellular alkalinization. In Arabidopsis thaliana (Mouse-ear cress), this protein is Protein RALF-like 1 (RALF1).